Reading from the N-terminus, the 324-residue chain is Phospho-N-acetylmuramoyl-pentapeptide-transferase (324 aa).

The next 10 membrane-spanning stretches (helical) occupy residues threonine 9–valine 29, methionine 54–glycine 74, valine 77–leucine 97, phenylalanine 117–alanine 137, isoleucine 147–serine 167, leucine 176–phenylalanine 196, methionine 201–asparagine 221, isoleucine 227–leucine 247, leucine 253–phenylalanine 273, and valine 304–phenylalanine 324.

It belongs to the glycosyltransferase 4 family. MraY subfamily. The cofactor is Mg(2+).

The protein resides in the cell membrane. The enzyme catalyses UDP-N-acetyl-alpha-D-muramoyl-L-alanyl-gamma-D-glutamyl-meso-2,6-diaminopimeloyl-D-alanyl-D-alanine + di-trans,octa-cis-undecaprenyl phosphate = di-trans,octa-cis-undecaprenyl diphospho-N-acetyl-alpha-D-muramoyl-L-alanyl-D-glutamyl-meso-2,6-diaminopimeloyl-D-alanyl-D-alanine + UMP. It functions in the pathway cell wall biogenesis; peptidoglycan biosynthesis. In terms of biological role, catalyzes the initial step of the lipid cycle reactions in the biosynthesis of the cell wall peptidoglycan: transfers peptidoglycan precursor phospho-MurNAc-pentapeptide from UDP-MurNAc-pentapeptide onto the lipid carrier undecaprenyl phosphate, yielding undecaprenyl-pyrophosphoryl-MurNAc-pentapeptide, known as lipid I. The sequence is that of Phospho-N-acetylmuramoyl-pentapeptide-transferase from Listeria welshimeri serovar 6b (strain ATCC 35897 / DSM 20650 / CCUG 15529 / CIP 8149 / NCTC 11857 / SLCC 5334 / V8).